The primary structure comprises 116 residues: Holo-[acyl-carrier-protein] synthase (116 aa).

Mg(2+) contacts are provided by aspartate 5 and glutamate 50.

The protein belongs to the P-Pant transferase superfamily. AcpS family. Mg(2+) serves as cofactor.

It is found in the cytoplasm. The catalysed reaction is apo-[ACP] + CoA = holo-[ACP] + adenosine 3',5'-bisphosphate + H(+). Functionally, transfers the 4'-phosphopantetheine moiety from coenzyme A to a Ser of acyl-carrier-protein. The sequence is that of Holo-[acyl-carrier-protein] synthase from Nitratiruptor sp. (strain SB155-2).